We begin with the raw amino-acid sequence, 253 residues long: 3-deoxy-manno-octulosonate cytidylyltransferase (253 aa).

The protein belongs to the KdsB family.

It is found in the cytoplasm. The enzyme catalyses 3-deoxy-alpha-D-manno-oct-2-ulosonate + CTP = CMP-3-deoxy-beta-D-manno-octulosonate + diphosphate. It participates in nucleotide-sugar biosynthesis; CMP-3-deoxy-D-manno-octulosonate biosynthesis; CMP-3-deoxy-D-manno-octulosonate from 3-deoxy-D-manno-octulosonate and CTP: step 1/1. It functions in the pathway bacterial outer membrane biogenesis; lipopolysaccharide biosynthesis. Its function is as follows. Activates KDO (a required 8-carbon sugar) for incorporation into bacterial lipopolysaccharide in Gram-negative bacteria. This is 3-deoxy-manno-octulosonate cytidylyltransferase from Neisseria meningitidis serogroup C (strain 053442).